Consider the following 388-residue polypeptide: MNNPNIDSDELTALFTADTPLIDVRAPLEFILGSLPGSVNLPILNNEERALVGTTYKQQGSEAAVMLGHEMISGQAKQDRLQQWLDFIRQHPRTVLYCFRGGKRSQITQQWLKDAGVDRPLIIGGYKQARQFLINTIDRFSENHTLLVITGPTGSGKTQLIQEIRNSYPVLDIEALARHRGSAFGGMSLPQPTQIDFENQLAVNLLKLKQNYLFDPVVVEDESRHTGRVYLPASFFEHMRSSEIIWVDEPLNTRVDNIFGDYIVATPIGQAQQARRNTQPLSSATEIQEILCQQALLLFDKYASALQAISKKLGGVRFQEVSQDLENARSSFVNRNEIQSNKTWIEKLVRYYYDPLYLGSLQRRQVNPCFKGSRQAAIDYLRARKQHA.

The region spanning Phe15–Asp138 is the Rhodanese domain. The active-site S-selanylcysteine intermediate is Cys98.

It belongs to the SelU family. As to quaternary structure, monomer.

The catalysed reaction is 5-methylaminomethyl-2-thiouridine(34) in tRNA + selenophosphate + (2E)-geranyl diphosphate + H2O + H(+) = 5-methylaminomethyl-2-selenouridine(34) in tRNA + (2E)-thiogeraniol + phosphate + diphosphate. The enzyme catalyses 5-methylaminomethyl-2-thiouridine(34) in tRNA + (2E)-geranyl diphosphate = 5-methylaminomethyl-S-(2E)-geranyl-thiouridine(34) in tRNA + diphosphate. It carries out the reaction 5-methylaminomethyl-S-(2E)-geranyl-thiouridine(34) in tRNA + selenophosphate + H(+) = 5-methylaminomethyl-2-(Se-phospho)selenouridine(34) in tRNA + (2E)-thiogeraniol. It catalyses the reaction 5-methylaminomethyl-2-(Se-phospho)selenouridine(34) in tRNA + H2O = 5-methylaminomethyl-2-selenouridine(34) in tRNA + phosphate. Involved in the post-transcriptional modification of the uridine at the wobble position (U34) of tRNA(Lys), tRNA(Glu) and tRNA(Gln). Catalyzes the conversion of 2-thiouridine (S2U-RNA) to 2-selenouridine (Se2U-RNA). Acts in a two-step process involving geranylation of 2-thiouridine (S2U) to S-geranyl-2-thiouridine (geS2U) and subsequent selenation of the latter derivative to 2-selenouridine (Se2U) in the tRNA chain. The polypeptide is tRNA 2-selenouridine synthase (Nitrosomonas eutropha (strain DSM 101675 / C91 / Nm57)).